The primary structure comprises 633 residues: MDKNTLIGFLLIGVVLFAFSWFNRPTPEQLEAQRRYQDSIAKIEYAQQLELQKQENKSALVEDSLENLPDSVRAQRLQQSFGVFGDAMVGTEDYTTLQNDVVELRISNKGGRICYARLKEYDTYNDEPLVLFDEKESNFNFTLVTATNRVVNTSDLYFTPVKGNDPNSVIMRLNTGEGSHLDFTYTLKPDDYMVQYQILGTGLNGVLAPSTNALDLLWEQDIRQQEKGRKFEDRYVTLNYKFMADDVEHLSESKSDSKQIPNRLKWIGYKDMFFSTVLISQEGFEATTLDSKAIPEGDVLKQFKTTASVPFDLQGKEATNLSFYFGPNKFALLKSFDKGVSAEQQLDLEKLVPLGWGIFRWVNQYFVIPLFDFLGKFIHNYGILILLMTIIVKIILFPLTYKSYMSSAKMRVLRPQVEEINAKYPGQDKAMERQKATMELYSRAGASPMSGCLPMLLQMPILIALFMFFPSAIELRHQSFLWAHDLSTYDAIFSWNKYIPIITPYFGNHISLFCLLMTITNIFYTKYNMEMTNTGQQQMPGMKAMMYMMPLMFLVFFNQYASGLTYYYFISTLITIVQTLIFRYTINEDKLLAKLEANKRKPMKKSGFMKRLEEAQRAQQETLRKQQEAKKKR.

The next 6 membrane-spanning stretches (helical) occupy residues 3–23, 377–397, 453–473, 499–519, 541–561, and 562–582; these read KNTL…SWFN, FIHN…IILF, LPML…PSAI, IPII…LMTI, GMKA…NQYA, and SGLT…TLIF. Residues 612–633 are disordered; that stretch reads LEEAQRAQQETLRKQQEAKKKR.

It belongs to the OXA1/ALB3/YidC family. Type 1 subfamily. Interacts with the Sec translocase complex via SecD. Specifically interacts with transmembrane segments of nascent integral membrane proteins during membrane integration.

Its subcellular location is the cell inner membrane. Functionally, required for the insertion and/or proper folding and/or complex formation of integral membrane proteins into the membrane. Involved in integration of membrane proteins that insert both dependently and independently of the Sec translocase complex, as well as at least some lipoproteins. Aids folding of multispanning membrane proteins. This chain is Membrane protein insertase YidC, found in Parabacteroides distasonis (strain ATCC 8503 / DSM 20701 / CIP 104284 / JCM 5825 / NCTC 11152).